We begin with the raw amino-acid sequence, 61 residues long: Putative MSV199 domain-containing protein 200R (61 aa).

The sequence is that of Putative MSV199 domain-containing protein 200R from Invertebrate iridescent virus 6 (IIV-6).